The sequence spans 514 residues: MAVWQSATGKVYLPPSTPVARVQSTDEYIQRTNIYYHANTDRLLTVGHPYFNVYNNNGDTLQVPKVSGNQHRVFRLKLPDPNRFALADMSVYNPDKERLVWACRGLEISRGQPLGVGSTGHPYFNKVKDTENSNSYTTTSTDDRQNTSFDPKQIQMFIVGCTPCIGEHWEKAIPCAEDQQQGLCPPIELKNTVIEDGDMADIGFGNMNFKTLQQNRSDVSLDIVNEICKYPDFLKMQNDVYGDACFFYARREQCYARHFFVRGGKTGDDIPAAQIDDGMMKNQYYIPGGQDQSQKDIGNAMYFPTVSGSLVSSDAQLFNRPFWLQRAQGHNNGILWANQMFVTVVDNTRNTNFSISVYTENGELKNITDYKSTQFREYLRHVEEYEISLILQLCKIPLKADVLAQINAMNSSLLEEWQLGFVPTPDTPIHDTYRYIDSLATRCPDKSPPKEKPDPYAKFNFWNVDLTERLSLDLDQYSLGRKFLFQAGLQQTTVNGTKSISRGSVRGTKRKRKN.

Residues 127–147 form a disordered region; that stretch reads VKDTENSNSYTTTSTDDRQNT.

This sequence belongs to the papillomaviridae L1 protein family. Self-assembles into homopentamers. The capsid has an icosahedral symmetry and consists of 72 capsomers, with each capsomer being a pentamer of L1. Interacts with the minor capsid protein L2; this interaction is necessary for viral genome encapsidation. Interacts with protein E2; this interaction enhances E2-dependent replication and transcription activation.

The protein localises to the virion. It is found in the host nucleus. Its function is as follows. Forms an icosahedral capsid with a T=7 symmetry and a 50 nm diameter. The capsid is composed of 72 pentamers linked to each other by disulfide bonds and associated with L2 proteins. Binds to heparan sulfate proteoglycans on cell surface of basal layer keratinocytes to provide initial virion attachment. This binding mediates a conformational change in the virus capsid that facilitates efficient infection. The virion enters the host cell via endocytosis. During virus trafficking, L1 protein dissociates from the viral DNA and the genomic DNA is released to the host nucleus. The virion assembly takes place within the cell nucleus. Encapsulates the genomic DNA together with protein L2. This Human papillomavirus type 8 protein is Major capsid protein L1.